Reading from the N-terminus, the 248-residue chain is PF03932 family protein CutC (248 aa).

It belongs to the CutC family. As to quaternary structure, homodimer.

It is found in the cytoplasm. The polypeptide is PF03932 family protein CutC (Shigella dysenteriae serotype 1 (strain Sd197)).